The sequence spans 335 residues: Biotin synthase (335 aa).

In terms of domain architecture, Radical SAM core spans tyrosine 46 to arginine 274. 3 residues coordinate [4Fe-4S] cluster: cysteine 61, cysteine 65, and cysteine 68. [2Fe-2S] cluster is bound by residues cysteine 105, cysteine 137, cysteine 197, and arginine 269.

It belongs to the radical SAM superfamily. Biotin synthase family. Homodimer. The cofactor is [4Fe-4S] cluster. Requires [2Fe-2S] cluster as cofactor.

It carries out the reaction (4R,5S)-dethiobiotin + (sulfur carrier)-SH + 2 reduced [2Fe-2S]-[ferredoxin] + 2 S-adenosyl-L-methionine = (sulfur carrier)-H + biotin + 2 5'-deoxyadenosine + 2 L-methionine + 2 oxidized [2Fe-2S]-[ferredoxin]. Its pathway is cofactor biosynthesis; biotin biosynthesis; biotin from 7,8-diaminononanoate: step 2/2. In terms of biological role, catalyzes the conversion of dethiobiotin (DTB) to biotin by the insertion of a sulfur atom into dethiobiotin via a radical-based mechanism. This chain is Biotin synthase, found in Prochlorococcus marinus (strain MIT 9312).